A 469-amino-acid polypeptide reads, in one-letter code: Putative diacyglycerol O-acyltransferase MT0231 (469 aa).

Residue His-139 is the Proton acceptor of the active site.

It belongs to the long-chain O-acyltransferase family.

It catalyses the reaction an acyl-CoA + a 1,2-diacyl-sn-glycerol = a triacyl-sn-glycerol + CoA. The protein operates within glycerolipid metabolism; triacylglycerol biosynthesis. This is Putative diacyglycerol O-acyltransferase MT0231 from Mycobacterium tuberculosis (strain CDC 1551 / Oshkosh).